The following is a 445-amino-acid chain: Tubulin beta chain (445 aa).

The short motif at 1 to 4 (MREI) is the MREI motif element. Residues Gln11, Glu69, Ser138, Gly142, Thr143, Gly144, Asn204, and Asn226 each contribute to the GTP site. Mg(2+) is bound at residue Glu69. Positions 421 to 445 (EYQQYQDATAEEEGEGEEEGDEEVA) are disordered. Residues 429–445 (TAEEEGEGEEEGDEEVA) are compositionally biased toward acidic residues. Glu438 carries the post-translational modification 5-glutamyl polyglutamate.

It belongs to the tubulin family. As to quaternary structure, dimer of alpha and beta chains. A typical microtubule is a hollow water-filled tube with an outer diameter of 25 nm and an inner diameter of 15 nM. Alpha-beta heterodimers associate head-to-tail to form protofilaments running lengthwise along the microtubule wall with the beta-tubulin subunit facing the microtubule plus end conferring a structural polarity. Microtubules usually have 13 protofilaments but different protofilament numbers can be found in some organisms and specialized cells. Mg(2+) serves as cofactor. In terms of processing, some glutamate residues at the C-terminus are polyglycylated, resulting in polyglycine chains on the gamma-carboxyl group. Glycylation is mainly limited to tubulin incorporated into axonemes (cilia and flagella) whereas glutamylation is prevalent in neuronal cells, centrioles, axonemes, and the mitotic spindle. Both modifications can coexist on the same protein on adjacent residues, and lowering polyglycylation levels increases polyglutamylation, and reciprocally. The precise function of polyglycylation is still unclear. Some glutamate residues at the C-terminus are polyglutamylated, resulting in polyglutamate chains on the gamma-carboxyl group. Polyglutamylation plays a key role in microtubule severing by spastin (SPAST). SPAST preferentially recognizes and acts on microtubules decorated with short polyglutamate tails: severing activity by SPAST increases as the number of glutamates per tubulin rises from one to eight, but decreases beyond this glutamylation threshold. Brain.

It localises to the cytoplasm. The protein resides in the cytoskeleton. Its function is as follows. Tubulin is the major constituent of microtubules, a cylinder consisting of laterally associated linear protofilaments composed of alpha- and beta-tubulin heterodimers. Microtubules grow by the addition of GTP-tubulin dimers to the microtubule end, where a stabilizing cap forms. Below the cap, tubulin dimers are in GDP-bound state, owing to GTPase activity of alpha-tubulin. The sequence is that of Tubulin beta chain from Pseudopleuronectes americanus (Winter flounder).